The sequence spans 309 residues: 2-phospho-L-lactate transferase (309 aa).

Residues Asp48 and Lys87 each coordinate 7,8-didemethyl-8-hydroxy-5-deazariboflavin.

Belongs to the CofD family. As to quaternary structure, homodimer. The cofactor is Mg(2+).

It carries out the reaction (2S)-lactyl-2-diphospho-5'-guanosine + 7,8-didemethyl-8-hydroxy-5-deazariboflavin = oxidized coenzyme F420-0 + GMP + H(+). The protein operates within cofactor biosynthesis; coenzyme F420 biosynthesis. Functionally, catalyzes the transfer of the 2-phospholactate moiety from (2S)-lactyl-2-diphospho-5'-guanosine to 7,8-didemethyl-8-hydroxy-5-deazariboflavin (FO) with the formation of oxidized coenzyme F420-0 and GMP. The polypeptide is 2-phospho-L-lactate transferase (Methanosarcina barkeri (strain Fusaro / DSM 804)).